Consider the following 345-residue polypeptide: Ferrochelatase (345 aa).

2 residues coordinate Fe cation: His-215 and Glu-296.

This sequence belongs to the ferrochelatase family.

Its subcellular location is the cytoplasm. It carries out the reaction heme b + 2 H(+) = protoporphyrin IX + Fe(2+). Its pathway is porphyrin-containing compound metabolism; protoheme biosynthesis; protoheme from protoporphyrin-IX: step 1/1. In terms of biological role, catalyzes the ferrous insertion into protoporphyrin IX. Essential for normal nodule development. The sequence is that of Ferrochelatase from Bradyrhizobium diazoefficiens (strain JCM 10833 / BCRC 13528 / IAM 13628 / NBRC 14792 / USDA 110).